The primary structure comprises 1177 residues: Topoisomerase 1-associated factor 1 (1177 aa).

Disordered regions lie at residues 575-597 (AKQA…EEDL), 791-815 (REAW…PVKS), 874-1001 (LTEP…ADQE), and 1021-1177 (LLHG…SDSE). Residues 583-597 (IEGDDEEQASEEEDL) show a composition bias toward acidic residues. The segment covering 791–803 (REAWESQEQHSEG) has biased composition (basic and acidic residues). Acidic residues-rich tracts occupy residues 911–921 (FGSDSEGDDNV) and 954–963 (EEEEPDEEDL). Over residues 981–991 (IKSDLYIHASD) the composition is skewed to basic and acidic residues. A compositionally biased stretch (polar residues) spans 1086–1096 (SLGQGSPSLQG). Composition is skewed to acidic residues over residues 1108–1118 (EENELDFDDDL) and 1146–1155 (TIDEDDDDEA).

The protein belongs to the timeless family. Component of the fork protection complex (FPC) consisting of tof1 and csm3.

It localises to the nucleus. Functionally, forms a fork protection complex (FPC) with csm3 and which is required for chromosome segregation during meiosis and DNA damage repair. FPC coordinates leading and lagging strand synthesis and moves with the replication fork. FPC stabilizes replication forks in a configuration that is recognized by replication checkpoint sensors. The chain is Topoisomerase 1-associated factor 1 (tof1) from Neosartorya fischeri (strain ATCC 1020 / DSM 3700 / CBS 544.65 / FGSC A1164 / JCM 1740 / NRRL 181 / WB 181) (Aspergillus fischerianus).